The chain runs to 885 residues: MGEGALAPGLQLLLRACEQGDTDTARRLLEPGGEPVAGSEAGAEPAGPEAARAVEAGTPVPVDCSDEAGNSALQLAAAGGHEPLVRFLLRRGASVNSRNHYGWSALMQAARCGHASVAHLLLDHGADVNAQNRLGASVLTVASRGGHLGVVKLLLEAGATVDHRNPSGESTASGGSRDELLGITALMAAVQHGHEAVVRLLMEWGADPNHTARTVGWSPLMLAALLGKLSVVQQLVEKGANPDHLGVLEKTAFEVALDRKHRDLADYLDPLTTVRPKTDEEKRRPDIFHALKMGNFQLVKEIADEDPNHVNLVNGDGATPLMLAAVTGQLPLVQLLVEKHADMNKQDSVHGWTALMQATYHGNKEIVKYLLNQGADVTLRAKNGYTAFDLVMLLNDPDTELVRLLASVCMQVNKDRGGRPSHRPPLPHSKARQPWSIPMLPDDKGGLKSWWSRMSNRFRKLKLMQTLPRGLAANQPLPFSDEPELALDSTMRAPPQDRTNHLGPPEAAHAAKDSGPGNPRREKDDVLLTTMLRNGAPFPRLPSDKLKAVIPPFLPPSSFELWSSDRSRTCPNGKADPMKTVLPPRASRAHPVGCVGTDGAAGRPVKFPSISRSPTSPASSGNFNHSPHSSGGASGVGSMSRLGGELHNRSGGSVDSVLSQIAAQRKKAAGLCEQKPPCQQSSPVGPATGSSPPELPASLLGSGSGSSNVTSSSKKLDPGKRPPSGTSATSKSTSPTLTPSPSPKGHTAESSVSSSSSHRQSKSSGGSSSGTITDEDELTGILKKLSLEKYQPIFEEQEVDMEAFLTLTDGDLQELGIKTDGSRQQILAAISELNAGKGRERQILQETIHNFHSSFESSASNTRAPGNSPCMAGWVRPEETVSSRR.

ANK repeat units follow at residues 8–37 (PGLQLLLRACEQGDTDTARRLLEPGGEPVA), 68–97 (AGNSALQLAAAGGHEPLVRFLLRRGASVNS), 101–130 (YGWSALMQAARCGHASVAHLLLDHGADVNA), 134–163 (LGASVLTVASRGGHLGVVKLLLEAGATVDH), 181–210 (LGITALMAAVQHGHEAVVRLLMEWGADPNH), 215–244 (VGWSPLMLAALLGKLSVVQQLVEKGANPDH), 282–312 (KRRPDIFHALKMGNFQLVKEIADEDPNHVNL), 316–345 (DGATPLMLAAVTGQLPLVQLLVEKHADMNK), 350–379 (HGWTALMQATYHGNKEIVKYLLNQGADVTL), and 383–414 (NGYTAFDLVMLLNDPDTELVRLLASVCMQVNK). 3-hydroxyasparagine is present on Asn129. Disordered stretches follow at residues 415–439 (DRGGRPSHRPPLPHSKARQPWSIPM), 491–522 (MRAPPQDRTNHLGPPEAAHAAKDSGPGNPRRE), 563–775 (SSDR…ITDE), and 855–885 (FESSASNTRAPGNSPCMAGWVRPEETVSSRR). Positions 608 to 640 (PSISRSPTSPASSGNFNHSPHSSGGASGVGSMS) are enriched in low complexity. Ser650 is subject to Phosphoserine. Positions 650–662 (SGGSVDSVLSQIA) are enriched in polar residues. 2 stretches are compositionally biased toward low complexity: residues 689 to 713 (GSSPPELPASLLGSGSGSSNVTSSS) and 722 to 739 (PPSGTSATSKSTSPTLTP). Residues Ser734 and Ser742 each carry the phosphoserine modification. Low complexity predominate over residues 750-770 (SSVSSSSSHRQSKSSGGSSSG). The SAM domain maps to 773-836 (TDEDELTGIL…LAAISELNAG (64 aa)). The segment covering 855–865 (FESSASNTRAP) has biased composition (polar residues). The span at 876–885 (RPEETVSSRR) shows a compositional bias: basic and acidic residues.

Homooligomer. Interacts with NEK8. Central component of a complex containing at least ANKS6, INVS, NEK8 and NPHP3. ANKS6 may organize complex assembly by linking INVS and NPHP3 to NEK8 and INVS may target the complex to the proximal ciliary axoneme. Interacts (via SAM domain) with BICC1 (via KH domains) in an RNA-dependent manner. Interacts (via SAM domain) with ANKS3 (via SAM domain). Hydroxylated at Asn-129, most probably by HIF1AN. This hydroxylation results in decreased NEK8-binding. Widely expressed with moderate level in brain, skeletal muscle and testis. Expressed in renal tubules.

It is found in the cell projection. Its subcellular location is the cilium. The protein resides in the cytoplasm. Its function is as follows. Required for renal function. The polypeptide is Ankyrin repeat and SAM domain-containing protein 6 (Anks6) (Rattus norvegicus (Rat)).